A 45-amino-acid chain; its full sequence is uncharacterized protein (45 aa).

This is an uncharacterized protein from Dictyostelium discoideum (Social amoeba).